The chain runs to 1000 residues: uncharacterized protein (1000 aa).

Positions 787–809 are enriched in basic and acidic residues; sequence RQYEKLKRQRAKSETERHQERHG. Residues 787–812 form a disordered region; that stretch reads RQYEKLKRQRAKSETERHQERHGKLS.

This is an uncharacterized protein from Picosynechococcus sp. (strain ATCC 27264 / PCC 7002 / PR-6) (Agmenellum quadruplicatum).